Consider the following 88-residue polypeptide: Small ribosomal subunit protein bS20 (88 aa).

The tract at residues 1-21 (MANSAQAKKRARQNVKARKHN) is disordered. Over residues 7–21 (AKKRARQNVKARKHN) the composition is skewed to basic residues.

This sequence belongs to the bacterial ribosomal protein bS20 family.

In terms of biological role, binds directly to 16S ribosomal RNA. This Acinetobacter baumannii (strain AB307-0294) protein is Small ribosomal subunit protein bS20.